The following is a 589-amino-acid chain: Serine/threonine-protein kinase STE7 homolog (589 aa).

Positions 1-18 are enriched in basic and acidic residues; that stretch reads MTRTTRIDTQEATKHKDL. Disordered stretches follow at residues 1–162 and 185–232; these read MTRT…DPDN and RQHY…PASS. The segment covering 24-33 has biased composition (low complexity); sequence PLSLSSNPNP. The span at 57-69 shows a compositional bias: polar residues; sequence VKSTSGSLRSSDM. Positions 92–121 are enriched in low complexity; it reads PTASSSATSTPTSNITGSSSASSIQFAQKS. Polar residues-rich tracts occupy residues 127 to 136 and 144 to 162; these read IVSQTLSRPS and SGYS…DPDN. A compositionally biased stretch (basic residues) spans 185–203; sequence RQHYQNSHHHLPTTNRKRQ. Residues 206 to 220 are compositionally biased toward low complexity; that stretch reads ISSISPTKSSAASSP. The 317-residue stretch at 249–565 folds into the Protein kinase domain; sequence LLTLKQLGSG…QLLEDKEHFF (317 aa). Residues 255 to 263 and Lys278 each bind ATP; that span reads LGSGNSGSV. Catalysis depends on Asp374, which acts as the Proton acceptor. Ser402 is subject to Phosphoserine. Phosphothreonine is present on Thr408. Residues 473 to 499 form a disordered region; it reads IAAERNGQNSPSRSRKNKQKGNGYNSY.

It belongs to the protein kinase superfamily. STE Ser/Thr protein kinase family. MAP kinase kinase subfamily.

The catalysed reaction is L-seryl-[protein] + ATP = O-phospho-L-seryl-[protein] + ADP + H(+). The enzyme catalyses L-threonyl-[protein] + ATP = O-phospho-L-threonyl-[protein] + ADP + H(+). It carries out the reaction L-tyrosyl-[protein] + ATP = O-phospho-L-tyrosyl-[protein] + ADP + H(+). In Candida albicans (strain WO-1) (Yeast), this protein is Serine/threonine-protein kinase STE7 homolog (HST7).